The sequence spans 233 residues: Orotidine 5'-phosphate decarboxylase (233 aa).

Substrate-binding positions include Asp10, Lys32, 59–68, Thr119, Arg180, Gln189, Gly209, and Arg210; that span reads DLKFHDIPNT. Lys61 acts as the Proton donor in catalysis.

This sequence belongs to the OMP decarboxylase family. Type 1 subfamily. As to quaternary structure, homodimer.

The catalysed reaction is orotidine 5'-phosphate + H(+) = UMP + CO2. Its pathway is pyrimidine metabolism; UMP biosynthesis via de novo pathway; UMP from orotate: step 2/2. In terms of biological role, catalyzes the decarboxylation of orotidine 5'-monophosphate (OMP) to uridine 5'-monophosphate (UMP). The protein is Orotidine 5'-phosphate decarboxylase of Pasteurella multocida (strain Pm70).